Here is a 291-residue protein sequence, read N- to C-terminus: Kidney mitochondrial carrier protein 1 (291 aa).

Serine 2 carries the post-translational modification N-acetylserine. Solcar repeat units follow at residues 7 to 96, 104 to 189, and 198 to 289; these read KPFV…LKRL, ETLL…TKKH, and DTVA…LKKL. 6 consecutive transmembrane segments (helical) span residues 9 to 26, 71 to 89, 106 to 124, 164 to 183, 204 to 224, and 264 to 283; these read FVYGGLASITAECGTFPI, GIAPAMLRQASYGTIKIGT, LLVNVVCGILSGVISSAIA, GVSLTAQRAAIVVGVELPVY, FLSSFTCGLVGALASNPVDVV, and GFWPNWLRLGPWNIIFFLTY.

It belongs to the mitochondrial carrier (TC 2.A.29) family. In terms of assembly, interacts with VDAC1. As to expression, present in kidney (at protein level). Expressed predominantly within the kidney cortex in the proximal and distal tubules and at lower levels in the testis and white adipose tissue.

The protein localises to the mitochondrion inner membrane. It catalyses the reaction sulfite(in) + sulfate(out) = sulfite(out) + sulfate(in). The enzyme catalyses thiosulfate(in) + sulfate(out) = thiosulfate(out) + sulfate(in). The catalysed reaction is sulfate(out) + phosphate(in) = sulfate(in) + phosphate(out). It carries out the reaction oxalate(in) + sulfate(out) = oxalate(out) + sulfate(in). It catalyses the reaction malonate(in) + sulfate(out) = malonate(out) + sulfate(in). The enzyme catalyses maleate(in) + sulfate(out) = maleate(out) + sulfate(in). The catalysed reaction is (S)-malate(in) + sulfate(out) = (S)-malate(out) + sulfate(in). It carries out the reaction (3S)-citramalate(in) + sulfate(out) = (3S)-citramalate(out) + sulfate(in). It catalyses the reaction (3R)-citramalate(in) + sulfate(out) = (3R)-citramalate(out) + sulfate(in). The enzyme catalyses sulfate(out) + succinate(in) = sulfate(in) + succinate(out). The catalysed reaction is (S,S)-tartrate(in) + sulfate(out) = (S,S)-tartrate(out) + sulfate(in). It carries out the reaction (2R,3R)-tartrate(in) + sulfate(out) = (2R,3R)-tartrate(out) + sulfate(in). It catalyses the reaction D-aspartate(in) + sulfate(out) = D-aspartate(out) + sulfate(in). The enzyme catalyses L-aspartate(in) + sulfate(out) = L-aspartate(out) + sulfate(in). The catalysed reaction is sulfate(in) = sulfate(out). It carries out the reaction phosphate(in) = phosphate(out). It catalyses the reaction (S)-malate(out) = (S)-malate(in). Functionally, antiporter that transports inorganic anions (sulfate, sulfite, thiosulfate and phosphate) and, to a lesser extent, a variety of dicarboxylates (e.g. malonate, malate and citramalate) and, even more so, aspartate. The sulfate/sulfate exchange is much higher than the phosphate/phosphate and malate/malate exchanges. The transport affinities is higher for sulfate and thiosulfate than for any other substrate. May catalyze the export of sulfite and thiosulfate (the hydrogen sulfide degradation products) from the mitochondria, thereby modulating the level of the hydrogen sulfide. Also may mediate a very low unidirectional transport of sulfate, phosphate and (S)-malate. The protein is Kidney mitochondrial carrier protein 1 of Mus musculus (Mouse).